The following is a 1407-amino-acid chain: DNA-directed RNA polymerase subunit beta' (1407 aa).

Zn(2+) contacts are provided by Cys-70, Cys-72, Cys-85, and Cys-88. Mg(2+) contacts are provided by Asp-460, Asp-462, and Asp-464. Residues Cys-814, Cys-889, Cys-896, and Cys-899 each contribute to the Zn(2+) site. The segment at 1384-1407 (LVGRSTSSGTEVTSPSKDAIPLGG) is disordered. A compositionally biased stretch (polar residues) spans 1386–1399 (GRSTSSGTEVTSPS).

The protein belongs to the RNA polymerase beta' chain family. The RNAP catalytic core consists of 2 alpha, 1 beta, 1 beta' and 1 omega subunit. When a sigma factor is associated with the core the holoenzyme is formed, which can initiate transcription. Mg(2+) is required as a cofactor. Requires Zn(2+) as cofactor.

The enzyme catalyses RNA(n) + a ribonucleoside 5'-triphosphate = RNA(n+1) + diphosphate. In terms of biological role, DNA-dependent RNA polymerase catalyzes the transcription of DNA into RNA using the four ribonucleoside triphosphates as substrates. The protein is DNA-directed RNA polymerase subunit beta' of Xylella fastidiosa (strain Temecula1 / ATCC 700964).